Here is a 326-residue protein sequence, read N- to C-terminus: Glycerol-3-phosphate dehydrogenase [NAD(P)+] (326 aa).

NADPH is bound by residues Trp13, Arg33, and Lys107. Sn-glycerol 3-phosphate-binding residues include Lys107, Gly135, and Ser137. Residue Ala139 participates in NADPH binding. Residues Lys190, Asp243, Ser253, Arg254, and Asn255 each coordinate sn-glycerol 3-phosphate. Lys190 functions as the Proton acceptor in the catalytic mechanism. An NADPH-binding site is contributed by Arg254. NADPH is bound by residues Leu273 and Glu275.

It belongs to the NAD-dependent glycerol-3-phosphate dehydrogenase family.

It localises to the cytoplasm. The enzyme catalyses sn-glycerol 3-phosphate + NAD(+) = dihydroxyacetone phosphate + NADH + H(+). It carries out the reaction sn-glycerol 3-phosphate + NADP(+) = dihydroxyacetone phosphate + NADPH + H(+). It participates in membrane lipid metabolism; glycerophospholipid metabolism. Its function is as follows. Catalyzes the reduction of the glycolytic intermediate dihydroxyacetone phosphate (DHAP) to sn-glycerol 3-phosphate (G3P), the key precursor for phospholipid synthesis. This chain is Glycerol-3-phosphate dehydrogenase [NAD(P)+], found in Brucella ovis (strain ATCC 25840 / 63/290 / NCTC 10512).